Consider the following 338-residue polypeptide: Formamidase (338 aa).

The CN hydrolase domain maps to 15–257 (VVIGLAQLAL…DEIVCCELRP (243 aa)). Glutamate 61 functions as the Proton acceptor in the catalytic mechanism. Catalysis depends on lysine 130, which acts as the Proton donor. The active-site Nucleophile is cysteine 163.

It belongs to the carbon-nitrogen hydrolase superfamily. Aliphatic amidase family.

It catalyses the reaction formamide + H2O = formate + NH4(+). In terms of biological role, is an aliphatic amidase with a restricted substrate specificity, as it only hydrolyzes formamide. The protein is Formamidase of Pseudomonas syringae pv. syringae (strain B728a).